The following is a 303-amino-acid chain: Elongation factor Ts (303 aa).

The involved in Mg(2+) ion dislocation from EF-Tu stretch occupies residues 81–84 (TDFV).

The protein belongs to the EF-Ts family.

It is found in the cytoplasm. Functionally, associates with the EF-Tu.GDP complex and induces the exchange of GDP to GTP. It remains bound to the aminoacyl-tRNA.EF-Tu.GTP complex up to the GTP hydrolysis stage on the ribosome. In Mesomycoplasma hyopneumoniae (strain 7448) (Mycoplasma hyopneumoniae), this protein is Elongation factor Ts.